Consider the following 695-residue polypeptide: MGINTKSFVMGKHTITLETGRIARQAHGAVLVSMDDTQVLVTVVGSKKMHPGQDFFPLSVDYIEKTYAAGKIPGGFLKREARPSEKETLTSRLIDRPIRPLFPNGFMNEVQVLITVISANSEVDPDIISMLGVSAALSISGIPFNGPIGSARVGYSNGKYTLNPTYTELVDSDLDMVVAGTDKAILMVESEASELSEKIILDAIIYAHEQYQVAITNIAEFVTQVGVQKWDWEAPATNEVLLSNIKSQFGKQINEAYKIKEKLNRHVKVGEIKTAAIEALVNEDKNGNSIDEVSKYFNKVEKSTVRERILNNDPRIDGRDNETVRELKIETGVLENTHGSALFTRGETQALVVTTLGSKREAQLIEKLESSERQNDYFLLHYNFPPYCVGEIGRVGTTKRREIGHGRLVRRGIAACLPSIEEFPYTVRVVSEITESNGSSSMASICGASLSLMDAGVPIKAPVAGIAMGLVKEGDRFTILTDILGDEDHLGDMDFKVAGTSRGINALQMDIKIQGITREIMEIALKQAKEARLNILGQMNQVICEPNTSNKNTPKTAVIKIQTDKIRDLIGKGGETIKGIISTSSASVDVDDNGNVNIFSNDQKSFDTAMQMVKDVTTTPKIGKVYTGKVVKIVDFGAFINIKPNQDGLLHISEIAHERVDKVENHLKEGDEIDVKVLSLDRGRIKLSRKVLLEK.

The Mg(2+) site is built by D488 and D494. Positions 554-613 (PKTAVIKIQTDKIRDLIGKGGETIKGIISTSSASVDVDDNGNVNIFSNDQKSFDTAMQMV) constitute a KH domain. An S1 motif domain is found at 623–690 (GKVYTGKVVK…DRGRIKLSRK (68 aa)).

The protein belongs to the polyribonucleotide nucleotidyltransferase family. As to quaternary structure, component of the RNA degradosome, which is a multiprotein complex involved in RNA processing and mRNA degradation. It depends on Mg(2+) as a cofactor.

The protein resides in the cytoplasm. The enzyme catalyses RNA(n+1) + phosphate = RNA(n) + a ribonucleoside 5'-diphosphate. Its function is as follows. Involved in mRNA degradation. Catalyzes the phosphorolysis of single-stranded polyribonucleotides processively in the 3'- to 5'-direction. In Ruthia magnifica subsp. Calyptogena magnifica, this protein is Polyribonucleotide nucleotidyltransferase.